The chain runs to 248 residues: Probable capsular polysaccharide biosynthesis protein YwqC (248 aa).

A run of 2 helical transmembrane segments spans residues isoleucine 18–phenylalanine 38 and leucine 174–leucine 194.

This sequence belongs to the CpsC/CapA family. Post-translationally, not phosphorylated in vitro by YwqD.

Its subcellular location is the cell membrane. The protein operates within capsule biogenesis; capsule polysaccharide biosynthesis. In terms of biological role, required for YwqD kinase activity. May bring YwqD and its substrates into contact. Probably involved in the regulation of capsular polysaccharide biosynthesis. This chain is Probable capsular polysaccharide biosynthesis protein YwqC (ywqC), found in Bacillus subtilis (strain 168).